A 362-amino-acid polypeptide reads, in one-letter code: Dihydroorotate dehydrogenase (quinone) (362 aa).

FMN contacts are provided by residues 62-66 (AGYDK) and Thr-86. Residue Lys-66 participates in substrate binding. 111-115 (NRLGF) lines the substrate pocket. 2 residues coordinate FMN: Asn-139 and Asn-170. Asn-170 serves as a coordination point for substrate. Ser-173 serves as the catalytic Nucleophile. Asn-175 provides a ligand contact to substrate. 2 residues coordinate FMN: Lys-215 and Ser-243. 244–245 (NT) contacts substrate. FMN is bound by residues Gly-266, Gly-295, and 316–317 (YS).

It belongs to the dihydroorotate dehydrogenase family. Type 2 subfamily. In terms of assembly, monomer. FMN is required as a cofactor.

The protein localises to the cell membrane. The enzyme catalyses (S)-dihydroorotate + a quinone = orotate + a quinol. Its pathway is pyrimidine metabolism; UMP biosynthesis via de novo pathway; orotate from (S)-dihydroorotate (quinone route): step 1/1. Its function is as follows. Catalyzes the conversion of dihydroorotate to orotate with quinone as electron acceptor. The protein is Dihydroorotate dehydrogenase (quinone) of Rhizobium leguminosarum bv. trifolii (strain WSM2304).